The primary structure comprises 241 residues: Ribosomal RNA large subunit methyltransferase E (241 aa).

Gly-88, Trp-90, Asp-111, Asp-127, and Asp-151 together coordinate S-adenosyl-L-methionine. The active-site Proton acceptor is Lys-191.

This sequence belongs to the class I-like SAM-binding methyltransferase superfamily. RNA methyltransferase RlmE family.

The protein resides in the cytoplasm. The catalysed reaction is uridine(2552) in 23S rRNA + S-adenosyl-L-methionine = 2'-O-methyluridine(2552) in 23S rRNA + S-adenosyl-L-homocysteine + H(+). Its function is as follows. Specifically methylates the uridine in position 2552 of 23S rRNA at the 2'-O position of the ribose in the fully assembled 50S ribosomal subunit. The chain is Ribosomal RNA large subunit methyltransferase E from Bartonella quintana (strain Toulouse) (Rochalimaea quintana).